Here is a 506-residue protein sequence, read N- to C-terminus: Aldehyde dehydrogenase (506 aa).

An NAD(+)-binding site is contributed by 218–224; sequence GFGLEAG. Catalysis depends on residues E262 and C301.

The protein belongs to the aldehyde dehydrogenase family.

It carries out the reaction an aldehyde + NAD(+) + H2O = a carboxylate + NADH + 2 H(+). This Rhodospirillum rubrum (strain ATCC 11170 / ATH 1.1.1 / DSM 467 / LMG 4362 / NCIMB 8255 / S1) protein is Aldehyde dehydrogenase.